The following is an 89-amino-acid chain: Small ribosomal subunit protein uS15 (89 aa).

This sequence belongs to the universal ribosomal protein uS15 family. Part of the 30S ribosomal subunit. Forms a bridge to the 50S subunit in the 70S ribosome, contacting the 23S rRNA.

One of the primary rRNA binding proteins, it binds directly to 16S rRNA where it helps nucleate assembly of the platform of the 30S subunit by binding and bridging several RNA helices of the 16S rRNA. Its function is as follows. Forms an intersubunit bridge (bridge B4) with the 23S rRNA of the 50S subunit in the ribosome. The polypeptide is Small ribosomal subunit protein uS15 (Shewanella sediminis (strain HAW-EB3)).